Here is a 678-residue protein sequence, read N- to C-terminus: Endopolyphosphatase (678 aa).

The Cytoplasmic segment spans residues M1–R2. A helical; Signal-anchor for type II membrane protein membrane pass occupies residues S3–I23. At S24–D678 the chain is on the vacuolar side. Positions Y70–E109 are disordered. Over residues D87 to E103 the composition is skewed to basic and acidic residues. N138, N369, and N447 each carry an N-linked (GlcNAc...) asparagine glycan. A disordered region spans residues K504–N547. Basic residues predominate over residues C529–P543. Residues N591 and N616 are each glycosylated (N-linked (GlcNAc...) asparagine).

The protein belongs to the endopolyphosphatase PPN1 family. It depends on a divalent metal cation as a cofactor. Processing by proteases in the vacuole may be required for activation.

Its subcellular location is the vacuole membrane. The enzyme catalyses [phosphate](n+1) + n H2O = (n+1) phosphate + n H(+). Functionally, catalyzes the hydrolysis of inorganic polyphosphate (polyP) chains of many hundreds of phosphate residues into shorter lengths. The sequence is that of Endopolyphosphatase (PPN1) from Cryptococcus neoformans var. neoformans serotype D (strain JEC21 / ATCC MYA-565) (Filobasidiella neoformans).